A 183-amino-acid chain; its full sequence is Ribosome-recycling factor (183 aa).

Belongs to the RRF family.

Its subcellular location is the cytoplasm. In terms of biological role, responsible for the release of ribosomes from messenger RNA at the termination of protein biosynthesis. May increase the efficiency of translation by recycling ribosomes from one round of translation to another. This Deinococcus deserti (strain DSM 17065 / CIP 109153 / LMG 22923 / VCD115) protein is Ribosome-recycling factor.